The chain runs to 577 residues: Signal peptide peptidase-like 2B (577 aa).

A signal peptide spans 1–19 (MAAARLAASLLLLAAQVAC). At 20–168 (EFGVLRVVPQ…APSEPVMDYN (149 aa)) the chain is on the lumenal side. Residues 49 to 149 (LPHDLNKVSL…RDLQDIFRRF (101 aa)) form the PA domain. The N-linked (GlcNAc...) asparagine glycan is linked to Asn-91. The helical transmembrane segment at 169–189 (MVIIFIMAVGTVALGGYWAGS) threads the bilayer. The Cytoplasmic portion of the chain corresponds to 190-216 (HDVKKYMKHKRDDVPEKQEDEAVDVTP). A helical transmembrane segment spans residues 217–237 (VMICVFVVMCCFMLVLLYYFY). Residues 238-239 (DR) lie on the Lumenal side of the membrane. The helical transmembrane segment at 240–260 (LVYVIIGIFCLASSTGLYSCL) threads the bilayer. The Cytoplasmic segment spans residues 261-286 (APCVRKLPFCTCRVPDNNLPYFHKRP). Residues 287–307 (QARMLLLALFCVTVSVVWGVF) form a helical membrane-spanning segment. The Lumenal segment spans residues 308-312 (RNEDQ). A helical membrane pass occupies residues 313-333 (WAWVLQDTLGIAFCLYMLRTI). Residues 334–341 (RLPTFKAC) are Cytoplasmic-facing. A helical membrane pass occupies residues 342–362 (TLLLLVLFVYDIFFVFITPYL). The active site involves Asp-352. Residues 363–405 (TKSGNSIMVEVATGPSNSSTHEKLPMVLKVPRLNTSPLSLCDR) are Lumenal-facing. Residues 406–426 (PFSLLGFGDILVPGLLVAYCH) traverse the membrane as a helical segment. The active site involves Asp-414. The Cytoplasmic segment spans residues 427-438 (RFDIQVQSSRIY). The helical transmembrane segment at 439 to 459 (FVACTIAYGLGLLVTFVALVL) threads the bilayer. Residues 460-463 (MRHG) are Lumenal-facing. A helical transmembrane segment spans residues 464–484 (QPALLYLVPCTLLTSCTVALW). Residues 465–467 (PAL) carry the PAL motif. At 485-577 (RREMGAFWTG…IPVVTPGTSA (93 aa)) the chain is on the cytoplasmic side. The tract at residues 502–577 (QTPWAAPQGP…IPVVTPGTSA (76 aa)) is disordered.

The protein belongs to the peptidase A22B family. As to quaternary structure, monomer. Homodimer. Interacts with ITM2B and TNF. In terms of processing, glycosylated.

Its subcellular location is the cell membrane. It is found in the golgi apparatus membrane. The protein resides in the lysosome membrane. It localises to the endosome membrane. The protein localises to the membrane. Its function is as follows. Intramembrane-cleaving aspartic protease (I-CLiP) that cleaves type II membrane signal peptides in the hydrophobic plane of the membrane. Functions in ITM2B and TNF processing. Catalyzes the intramembrane cleavage of the anchored fragment of shed TNF-alpha (TNF), which promotes the release of the intracellular domain (ICD) for signaling to the nucleus. May play a role in the regulation of innate and adaptive immunity. This chain is Signal peptide peptidase-like 2B, found in Rattus norvegicus (Rat).